We begin with the raw amino-acid sequence, 391 residues long: Cathepsin E (391 aa).

Positions 1–19 (MKTFLLLLLVLLELGQAPG) are cleaved as a signal peptide. Positions 20–53 (ALHRVPLSRRESLRKKLRAQGQLTELWKSQNLNM) are cleaved as a propeptide — activation peptide. Residues 74–387 (YFGTISIGSP…DRGNNRVGLA (314 aa)) form the Peptidase A1 domain. N-linked (GlcNAc...) asparagine glycosylation is present at N86. The active site involves D92. 2 cysteine pairs are disulfide-bonded: C105–C110 and C267–C271. The active site involves D276. The cysteines at positions 309 and 346 are disulfide-linked.

It belongs to the peptidase A1 family. In terms of assembly, homodimer; disulfide-linked. Post-translationally, glycosylated. The nature of the carbohydrate chain varies between cell types. Expressed abundantly in the surface and foveolar epithelial cells of the fundic and pyloric stomach mucosa, and at very low levels in the spleen.

The protein localises to the endosome. It catalyses the reaction Similar to cathepsin D, but slightly broader specificity.. In terms of biological role, may have a role in immune function. Probably involved in the processing of antigenic peptides during MHC class II-mediated antigen presentation. May play a role in activation-induced lymphocyte depletion in the thymus, and in neuronal degeneration and glial cell activation in the brain. In Cavia porcellus (Guinea pig), this protein is Cathepsin E (CTSE).